We begin with the raw amino-acid sequence, 337 residues long: Dihydroorotate dehydrogenase (quinone) (337 aa).

Residues 58–62 (AGLDK) and T82 contribute to the FMN site. K62 contacts substrate. Residue 107-111 (NCMGF) coordinates substrate. N137 and N170 together coordinate FMN. A substrate-binding site is contributed by N170. S173 acts as the Nucleophile in catalysis. N175 is a binding site for substrate. The FMN site is built by K215 and T243. 244–245 (NT) lines the substrate pocket. Residues G266, G294, and 315 to 316 (YS) each bind FMN.

It belongs to the dihydroorotate dehydrogenase family. Type 2 subfamily. As to quaternary structure, monomer. FMN serves as cofactor.

The protein localises to the cell membrane. It catalyses the reaction (S)-dihydroorotate + a quinone = orotate + a quinol. Its pathway is pyrimidine metabolism; UMP biosynthesis via de novo pathway; orotate from (S)-dihydroorotate (quinone route): step 1/1. Catalyzes the conversion of dihydroorotate to orotate with quinone as electron acceptor. The protein is Dihydroorotate dehydrogenase (quinone) of Dichelobacter nodosus (strain VCS1703A).